A 413-amino-acid chain; its full sequence is S-adenosylmethionine synthase (413 aa).

Residue histidine 15 participates in ATP binding. Mg(2+) is bound at residue aspartate 17. Glutamate 43 contributes to the K(+) binding site. 2 residues coordinate L-methionine: glutamate 56 and glutamine 100. The segment at 100 to 110 is flexible loop; it reads QSPDISQGVNE. Residues 171–173, 248–249, aspartate 257, 263–264, alanine 280, and lysine 284 each bind ATP; these read DGK, KF, and RK. Aspartate 257 is an L-methionine binding site. Lysine 288 provides a ligand contact to L-methionine.

The protein belongs to the AdoMet synthase family. In terms of assembly, homotetramer; dimer of dimers. Mg(2+) serves as cofactor. It depends on K(+) as a cofactor.

It is found in the cytoplasm. The enzyme catalyses L-methionine + ATP + H2O = S-adenosyl-L-methionine + phosphate + diphosphate. The protein operates within amino-acid biosynthesis; S-adenosyl-L-methionine biosynthesis; S-adenosyl-L-methionine from L-methionine: step 1/1. Catalyzes the formation of S-adenosylmethionine (AdoMet) from methionine and ATP. The overall synthetic reaction is composed of two sequential steps, AdoMet formation and the subsequent tripolyphosphate hydrolysis which occurs prior to release of AdoMet from the enzyme. The polypeptide is S-adenosylmethionine synthase (Prochlorococcus marinus subsp. pastoris (strain CCMP1986 / NIES-2087 / MED4)).